Here is an 826-residue protein sequence, read N- to C-terminus: MSDVVLLVLAIIFIIIFVLIYCTIFFEFDETTFSKRLHVLTEYAKRTNAEHPTPDVLGHVSDVYEHTYIVTWFNTNDLSVYHETVHDDTIEVFDFLEQKFSPAKSTVAQRVAPSASDPNAFVLTGDKSEVKMHCPQHFNFDYNQLKCVPINPCDTRAPGLYAMDEHLLDALVHSQHLDKDYTINAHLQHPTLYLRCLADGSYVVQECPDNYTFDAATSECKVNELCQGRPDGYVLDYFPETLLVNEFVECYESKHVVKQCPEQHVFDRQLMTCVQAHPCAFNGAGHTYITADIGDTQYFECLNNQESQLITCINRVRNTDGQYACSGDARCANLTDGTGQLVHMHVDDTFEYASGQLVCDNFEVISEIDCNTSDVLTNMLFLQKFKLETEFPRQVFDNGECVPATFNNVRVLNDTFPIQNVPNDYNIDMQTSIIGLTDMIPKLLAGDDLDDTFGQNVVLARDVGAVGLNPVTAEPIDCLGTQLFDVLDASRANICTESGDGVLKTLKFENGTFLSVFRDNLTGSDIDYKRFCAISYENSLKIVKSDHFERRILTNILQSDVCADLYTTMYQKYTTLARKYTTTPFQYTYTFVKPPPNIVVYAKNIQLKNATISKPAFDPFANKQIDNKNNLAKPLFDPFKNAVWYSEPDGGDGDHWGPDLPPPVQPDSEPDESEPEPEVSPLILDKKDLFYSCYYELPSFKLTSCYAENDVIIDAITDLRNNVTVDAECEPAKDLHYVLNAYAYTGNGVGCRSVFNDDGVAVIKEPIPSYVFANLNTQSNDGVHYNRHVHVKDGRYMACPDHLYDDVEFRCNVEADKLYYLDNMQF.

Positions 1–18 (MSDVVLLVLAIIFIIIFV) are cleaved as a signal peptide. The segment at 147–196 (CVPINPCDTRAPGLYAMDEHLLDALVHSQHLDKDYTINAHLQHPTLYLRC) adopts a C2HC BV-type zinc-finger fold. Intrachain disulfides connect Cys-207–Cys-220 and Cys-260–Cys-273. The N-linked (GlcNAc...) asparagine; by host glycan is linked to Asn-210. The Chitin-binding type-2 domain maps to 223–281 (NELCQGRPDGYVLDYFPETLLVNEFVECYESKHVVKQCPEQHVFDRQLMTCVQAHPCAF). Asn-333, Asn-371, Asn-413, Asn-510, Asn-520, and Asn-609 each carry an N-linked (GlcNAc...) asparagine; by host glycan. Residues 651–679 (GDGDHWGPDLPPPVQPDSEPDESEPEPEV) are disordered. Residues 668–677 (SEPDESEPEP) show a composition bias toward acidic residues. The N-linked (GlcNAc...) asparagine; by host glycan is linked to Asn-722.

The protein resides in the virion. Functionally, probable capsid-associated protein. The protein is Capsid-associated protein Vp91 of Epiphyas postvittana nucleopolyhedrovirus (EppoMNPV).